We begin with the raw amino-acid sequence, 217 residues long: Probable transaldolase (217 aa).

The active-site Schiff-base intermediate with substrate is Lys83.

Belongs to the transaldolase family. Type 3B subfamily.

It localises to the cytoplasm. It catalyses the reaction D-sedoheptulose 7-phosphate + D-glyceraldehyde 3-phosphate = D-erythrose 4-phosphate + beta-D-fructose 6-phosphate. It functions in the pathway carbohydrate degradation; pentose phosphate pathway; D-glyceraldehyde 3-phosphate and beta-D-fructose 6-phosphate from D-ribose 5-phosphate and D-xylulose 5-phosphate (non-oxidative stage): step 2/3. Transaldolase is important for the balance of metabolites in the pentose-phosphate pathway. In Brucella abortus (strain S19), this protein is Probable transaldolase.